The primary structure comprises 917 residues: Probable dipeptidyl-aminopeptidase B (917 aa).

The tract at residues 1–75 is disordered; that stretch reads MTVGRRLNDE…KYRDDVEEDW (75 aa). The Cytoplasmic portion of the chain corresponds to 1–93; sequence MTVGRRLNDE…NAKPSQRRTQ (93 aa). The segment covering 27-39 has biased composition (low complexity); sequence DSSSTASVSLTLV. Over residues 40–49 the composition is skewed to polar residues; the sequence is DGTNHTTAKP. Over residues 57–69 the composition is skewed to basic and acidic residues; sequence VSRDRYADEKYRD. The chain crosses the membrane as a helical; Signal-anchor for type II membrane protein span at residues 94 to 114; sequence IVFWLLVALCVGGWAVAFLFF. Over 115–917 the chain is Vacuolar; sequence VTSPGNTIST…KRVIRRLLHR (803 aa). Polar residues predominate over residues 124–133; the sequence is TTPDTGSGSP. The disordered stretch occupies residues 124–150; that stretch reads TTPDTGSGSPDSDVIKPGSPPAGKKIP. Asn-206, Asn-302, and Asn-354 each carry an N-linked (GlcNAc...) asparagine glycan. The active-site Charge relay system is the Ser-759. Residue Asn-818 is glycosylated (N-linked (GlcNAc...) asparagine). Active-site charge relay system residues include Asp-836 and His-869.

Belongs to the peptidase S9B family.

It localises to the vacuole membrane. It catalyses the reaction Release of an N-terminal dipeptide, Xaa-Yaa-|-Zaa-, from a polypeptide, preferentially when Yaa is Pro, provided Zaa is neither Pro nor hydroxyproline.. Type IV dipeptidyl-peptidase which removes N-terminal dipeptides sequentially from polypeptides having unsubstituted N-termini provided that the penultimate residue is proline. The sequence is that of Probable dipeptidyl-aminopeptidase B (DAPB) from Arthroderma gypseum (strain ATCC MYA-4604 / CBS 118893) (Microsporum gypseum).